The primary structure comprises 543 residues: Type I restriction enzyme MpnII methylase subunit (543 aa).

Residues 208 to 213 (EFFTPQ), 240 to 242 (SGS), and E265 contribute to the S-adenosyl-L-methionine site.

This sequence belongs to the N(4)/N(6)-methyltransferase family. The methyltransferase is composed of M and S polypeptides.

The catalysed reaction is a 2'-deoxyadenosine in DNA + S-adenosyl-L-methionine = an N(6)-methyl-2'-deoxyadenosine in DNA + S-adenosyl-L-homocysteine + H(+). In terms of biological role, the subtype gamma methyltransferase (M) subunit of a type I restriction enzyme. The M and S subunits together form a methyltransferase (MTase) that probably methylates A-2 on the top strand and A-3 on the bottom strand of the sequence 5'-GAN(7)TAY-3'. As the bacterial DNA is methylated on this sequence and this is the only type I methylase in the genome, it is probably responsible for all of the methylation on this site in the genome. The R subunit has multiple frameshifts and is probably not expressed in this bacteria. The polypeptide is Type I restriction enzyme MpnII methylase subunit (Mycoplasma pneumoniae (strain ATCC 29342 / M129 / Subtype 1) (Mycoplasmoides pneumoniae)).